The chain runs to 140 residues: MAEEPQSVLQLPTSIAAGGEGLTDVSPETTTPEPPSSAAVSPGTEEPAGDTKKKIDILLKAVGDTPIMKTKKWAVERTRTIQGLIDFIKKFLKLVASEQLFIYVNQSFAPSPDQEVGTLYECFGSDGKLVLHYCKSQAWG.

Positions 1–50 are disordered; it reads MAEEPQSVLQLPTSIAAGGEGLTDVSPETTTPEPPSSAAVSPGTEEPAGD. Residues 25 to 42 are compositionally biased toward low complexity; it reads VSPETTTPEPPSSAAVSP. Gly-140 is covalently cross-linked (Glycyl lysine isopeptide (Gly-Lys) (interchain with K-130 in ATG5)).

This sequence belongs to the ATG12 family. In terms of assembly, forms a conjugate with ATG5. Part of the minor complex composed of 4 sets of ATG12-ATG5 and ATG16L1 (400 kDa); this complex interacts with ATG3 leading to disruption of ATG7 interaction and promotion of ATG8-like proteins lipidation. Forms an 800-kDa complex composed of ATG12-ATG5 and ATG16L2. Interacts with DHX58/RIG-1, IFIH1/MDA5 and MAVS/IPS-1 in monomeric form as well as in ATG12-ATG5 conjugate. The interaction with MAVS is further enhanced upon vesicular stomatitis virus (VSV) infection. Interacts with ATG3; this interaction is essential for phosphatidylethanolamine (PE)-conjugated ATG8-like proteins formation. Interacts with ATG7. Interacts with ATG10. The ATG12-ATG5 conjugate interacts with RAB33A; this interaction is bridged by ATG16L1 and promotes ATG12-ATG5-ATG16L1 complex recruitment to phagophores. Interacts with TECPR1. Interacts with SH3BGRL. The ATG12-ATG5 conjugate interacts with PDCD6IP (via the BRO1 domain); this interaction is bridged by ATG12 and promotes multiple PDCD6IP-mediated functions such as endolysosomal trafficking, macroautophagy and exosome biogenesis. Post-translationally, acetylated by EP300. As to expression, ubiquitous.

It is found in the cytoplasm. It localises to the preautophagosomal structure membrane. Functionally, ubiquitin-like protein involved in autophagy vesicles formation. Conjugation with ATG5 through a ubiquitin-like conjugating system involving also ATG7 as an E1-like activating enzyme and ATG10 as an E2-like conjugating enzyme, is essential for its function. The ATG12-ATG5 conjugate acts as an E3-like enzyme which is required for lipidation of ATG8 family proteins and their association to the vesicle membranes. As part of the ATG8 conjugation system with ATG5 and ATG16L1, required for recruitment of LRRK2 to stressed lysosomes and induction of LRRK2 kinase activity in response to lysosomal stress. Its function is as follows. (Microbial infection) May act as a proviral factor. In association with ATG5, negatively regulates the innate antiviral immune response by impairing the type I IFN production pathway upon vesicular stomatitis virus (VSV) infection. Required for the translation of incoming hepatitis C virus (HCV) RNA and, thereby, for the initiation of HCV replication, but not required once infection is established. In Homo sapiens (Human), this protein is Ubiquitin-like protein ATG12.